Reading from the N-terminus, the 602-residue chain is ATP-dependent zinc metalloprotease FtsH 3 (602 aa).

Topologically, residues 1–18 are cytoplasmic; sequence MNSWFLQVSKRLGPAGRR. The chain crosses the membrane as a helical span at residues 19–39; it reads LWLLGFMGVVLAVTLGLALRA. Residues 40–117 lie on the Periplasmic side of the membrane; that stretch reads ARESATQRTA…DFASREDPSR (78 aa). Residues 118-138 form a helical membrane-spanning segment; sequence AASAVLPVVVLAAVGFALFTV. Over 139–602 the chain is Cytoplasmic; the sequence is SRRRSPKVFS…RRPRPEDQAA (464 aa). ATP is bound at residue 202-209; that stretch reads GEPGTGKT. His-425 lines the Zn(2+) pocket. Glu-426 is a catalytic residue. His-429 and Asp-501 together coordinate Zn(2+).

It in the central section; belongs to the AAA ATPase family. In the C-terminal section; belongs to the peptidase M41 family. In terms of assembly, homohexamer. It depends on Zn(2+) as a cofactor.

The protein localises to the cell inner membrane. Its function is as follows. Acts as a processive, ATP-dependent zinc metallopeptidase for both cytoplasmic and membrane proteins. Plays a role in the quality control of integral membrane proteins. This chain is ATP-dependent zinc metalloprotease FtsH 3, found in Sorangium cellulosum (strain So ce56) (Polyangium cellulosum (strain So ce56)).